Reading from the N-terminus, the 284-residue chain is Homeobox protein CDX-4 (284 aa).

Disordered regions lie at residues 15–40 and 120–155; these read PGTLMSPGGDGTAGTGGTGGGGSPMP and GGGTSGSSLPGQAGGSLVPTDAGAAKASSPSRSRHS. Over residues 22-37 the composition is skewed to gly residues; the sequence is GGDGTAGTGGTGGGGS. A DNA-binding region (homeobox) is located at residues 173–232; it reads KEKYRVVYTDHQRLELEKEFHCNRYITIQRKSELAVNLGLSERQVKIWFQNRRAKERKMI. Positions 238-253 are enriched in polar residues; that stretch reads QFENSGGSVQSDSDSI. The disordered stretch occupies residues 238–259; the sequence is QFENSGGSVQSDSDSISPGELP.

The protein belongs to the Caudal homeobox family.

Its subcellular location is the nucleus. This Homo sapiens (Human) protein is Homeobox protein CDX-4 (CDX4).